A 295-amino-acid polypeptide reads, in one-letter code: Protease HtpX (295 aa).

The next 2 membrane-spanning stretches (helical) occupy residues 4–24 (ILLFVATNLAVVLVASITLSL) and 41–61 (SSLLVFCAVFGFAGSLVSLFI). His147 contributes to the Zn(2+) binding site. The active site involves Glu148. His151 contacts Zn(2+). Helical transmembrane passes span 158 to 178 (VTLALVQGVVNTFVMFFARII) and 199 to 219 (VATIVAELILGILASMIVMWF). Glu224 contributes to the Zn(2+) binding site.

It belongs to the peptidase M48B family. Requires Zn(2+) as cofactor.

It localises to the cell inner membrane. In Pseudomonas putida (strain ATCC 700007 / DSM 6899 / JCM 31910 / BCRC 17059 / LMG 24140 / F1), this protein is Protease HtpX.